A 445-amino-acid polypeptide reads, in one-letter code: Fasciclin-like arabinogalactan protein 16 (445 aa).

An N-terminal signal peptide occupies residues 1–23; it reads MDSSYGATKFLLLLFLTTSIATA. FAS1 domains lie at 35 to 173 and 257 to 400; these read NSNS…ERLL and VKDF…DGVL. N-linked (GlcNAc...) asparagine glycosylation is found at asparagine 72 and asparagine 279.

It belongs to the fasciclin-like AGP family.

It localises to the secreted. May be a cell surface adhesion protein. In Arabidopsis thaliana (Mouse-ear cress), this protein is Fasciclin-like arabinogalactan protein 16 (FLA16).